The following is a 444-amino-acid chain: Docking protein 3 (444 aa).

The 117-residue stretch at 7-123 folds into the PH domain; sequence PVKDGLLYQQ…WMDPICQLAF (117 aa). The disordered stretch occupies residues 47–66; the sequence is DVRDGGLGPGGDRPAGPGRR. Ser-138 carries the post-translational modification Phosphoserine. In terms of domain architecture, IRS-type PTB spans 157-261; the sequence is EVAEFPVVVQ…ARQRERLPEL (105 aa). Phosphoserine is present on residues Ser-274, Ser-308, and Ser-314. Tyr-325 bears the Phosphotyrosine mark. The segment at 354 to 390 is disordered; sequence GLSNGGPEAQEGPPGGRSPLGSPIYHNSEELSWPGSA. Low complexity predominate over residues 358–376; it reads GGPEAQEGPPGGRSPLGSP. Position 371 is a phosphoserine (Ser-371).

This sequence belongs to the DOK family. Type A subfamily. In terms of assembly, on tyrosine phosphorylation, interacts with CSK and INPP5D/SHIP1 via their SH2 domains. Binds ABL1 through the PTB domain and in a kinase-dependent manner. Does not interact with RasGAP. Constitutively tyrosine-phosphorylated. Post-translationally, on IL2 stimulation, phosphorylated on C-terminal tyrosine residues possibly by Src kinases. Can also be phosphorylated by ABL1 kinase.

The protein resides in the cytoplasm. It localises to the cell membrane. Functionally, DOK proteins are enzymatically inert adaptor or scaffolding proteins. They provide a docking platform for the assembly of multimolecular signaling complexes. DOK3 is a negative regulator of JNK signaling in B-cells through interaction with INPP5D/SHIP1. May modulate ABL1 function. The protein is Docking protein 3 (Dok3) of Rattus norvegicus (Rat).